Reading from the N-terminus, the 127-residue chain is Aspartate 1-decarboxylase (127 aa).

Ser25 functions as the Schiff-base intermediate with substrate; via pyruvic acid in the catalytic mechanism. Ser25 is subject to Pyruvic acid (Ser). Thr57 is a substrate binding site. Residue Tyr58 is the Proton donor of the active site. 73 to 75 (GAA) provides a ligand contact to substrate.

Belongs to the PanD family. In terms of assembly, heterooctamer of four alpha and four beta subunits. Pyruvate serves as cofactor. Is synthesized initially as an inactive proenzyme, which is activated by self-cleavage at a specific serine bond to produce a beta-subunit with a hydroxyl group at its C-terminus and an alpha-subunit with a pyruvoyl group at its N-terminus.

The protein resides in the cytoplasm. The enzyme catalyses L-aspartate + H(+) = beta-alanine + CO2. It participates in cofactor biosynthesis; (R)-pantothenate biosynthesis; beta-alanine from L-aspartate: step 1/1. Functionally, catalyzes the pyruvoyl-dependent decarboxylation of aspartate to produce beta-alanine. This Neisseria meningitidis serogroup B (strain ATCC BAA-335 / MC58) protein is Aspartate 1-decarboxylase.